A 287-amino-acid chain; its full sequence is Methylamine utilization ferredoxin-type protein MauN (287 aa).

2 4Fe-4S ferredoxin-type domains span residues 218-248 (RVAAARREGCTNCGACFQICTEPHVITPALK) and 251-280 (GSTLILSGDCVNCGSCIDACPVNVFEMTMR). [4Fe-4S] cluster contacts are provided by Cys227, Cys230, Cys233, Cys237, Cys260, Cys263, Cys266, and Cys270.

Its pathway is one-carbon metabolism; methylamine degradation. Functionally, involved in electron transfer. The protein is Methylamine utilization ferredoxin-type protein MauN (mauN) of Methylorubrum extorquens (strain ATCC 14718 / DSM 1338 / JCM 2805 / NCIMB 9133 / AM1) (Methylobacterium extorquens).